Reading from the N-terminus, the 479-residue chain is Sulfate adenylyltransferase subunit 1 (479 aa).

Positions K22–K238 constitute a tr-type G domain. Residues G31–S38 are G1. A GTP-binding site is contributed by G31 to S38. Positions G89–D93 are G2. The tract at residues D110–G113 is G3. Residues D110–H114 and N165–D168 contribute to the GTP site. The tract at residues N165–D168 is G4. The interval S202–L204 is G5.

Belongs to the TRAFAC class translation factor GTPase superfamily. Classic translation factor GTPase family. CysN/NodQ subfamily. As to quaternary structure, heterodimer composed of CysD, the smaller subunit, and CysN.

It catalyses the reaction sulfate + ATP + H(+) = adenosine 5'-phosphosulfate + diphosphate. The protein operates within sulfur metabolism; hydrogen sulfide biosynthesis; sulfite from sulfate: step 1/3. With CysD forms the ATP sulfurylase (ATPS) that catalyzes the adenylation of sulfate producing adenosine 5'-phosphosulfate (APS) and diphosphate, the first enzymatic step in sulfur assimilation pathway. APS synthesis involves the formation of a high-energy phosphoric-sulfuric acid anhydride bond driven by GTP hydrolysis by CysN coupled to ATP hydrolysis by CysD. The sequence is that of Sulfate adenylyltransferase subunit 1 from Sulfurovum sp. (strain NBC37-1).